A 554-amino-acid polypeptide reads, in one-letter code: Malate synthase 1 (554 aa).

The active-site Proton acceptor is arginine 177. Residue aspartate 457 is the Proton donor of the active site. The SKL peroxisome targeting motif motif lies at 552-554 (SKL).

It belongs to the malate synthase family. Interacts with PEX9.

The protein localises to the peroxisome matrix. It carries out the reaction glyoxylate + acetyl-CoA + H2O = (S)-malate + CoA + H(+). Its pathway is carbohydrate metabolism; glyoxylate cycle; (S)-malate from isocitrate: step 2/2. Its function is as follows. Malate synthase which takes part in the glyoxylate cycle. MLS1 activity is essential for cells to grow on oleic acid as a sole carbon source. Two steps of the glyoxylate cycle take place in the cytosol, the splitting of isocitrate into succinate and glyoxylate, and the dehydrogenation of malate to oxaloacetate. However, the formation of malate from glyoxylate and acetyl-CoA undertaken MLS1, occurs in the peroxisomes when cells are grown on oleic acid. The source of acetyl-CoA being either peroxisomal when breaking down fatty acids, or cytosolic when extra-cellular two-carbon substrates are used, therefore, although not strictly essential, the peroxisomal localization of MLS1 appears to be advantageous for cells growing on oleic acid, in that acetyl-CoA production and utilization are thereby intimately compartmentalized together to increase efficiency. This chain is Malate synthase 1, found in Saccharomyces cerevisiae (strain YJM789) (Baker's yeast).